The primary structure comprises 134 residues: Ribosome-binding factor A (134 aa).

It belongs to the RbfA family. Monomer. Binds 30S ribosomal subunits, but not 50S ribosomal subunits or 70S ribosomes.

The protein localises to the cytoplasm. Its function is as follows. One of several proteins that assist in the late maturation steps of the functional core of the 30S ribosomal subunit. Associates with free 30S ribosomal subunits (but not with 30S subunits that are part of 70S ribosomes or polysomes). Required for efficient processing of 16S rRNA. May interact with the 5'-terminal helix region of 16S rRNA. The chain is Ribosome-binding factor A from Rhizobium etli (strain CIAT 652).